Reading from the N-terminus, the 269-residue chain is Chymotrypsin-like elastase family member 2A (269 aa).

The signal sequence occupies residues 1 to 16 (MIRALLLSTLVAGALS). Residues 17-28 (CGVPTYPPQLSR) constitute a propeptide, activation peptide. Residues 29–267 (VVGGEDARPN…YNDWISSVIE (239 aa)) form the Peptidase S1 domain. A disulfide bond links Cys-58 and Cys-74. Residues His-73 and Asp-121 each act as charge relay system in the active site. Cystine bridges form between Cys-155-Cys-222, Cys-186-Cys-202, and Cys-212-Cys-243. Ser-216 acts as the Charge relay system in catalysis.

This sequence belongs to the peptidase S1 family. Elastase subfamily. Interacts with CPA1. Interacts with SERPINA1. Pancreas.

The protein resides in the secreted. It catalyses the reaction Preferential cleavage: Leu-|-Xaa, Met-|-Xaa and Phe-|-Xaa. Hydrolyzes elastin.. Its function is as follows. Elastase that enhances insulin signaling and might have a physiologic role in cellular glucose metabolism. Circulates in plasma and reduces platelet hyperactivation, triggers both insulin secretion and degradation, and increases insulin sensitivity. The sequence is that of Chymotrypsin-like elastase family member 2A (CELA2A) from Bos taurus (Bovine).